We begin with the raw amino-acid sequence, 344 residues long: Type II methyltransferase M.FnuDI (344 aa).

In terms of domain architecture, SAM-dependent MTase C5-type spans 1–330 (MKLLSLFSGA…KRIKETLTDK (330 aa)). Residue cysteine 71 is part of the active site.

The protein belongs to the class I-like SAM-binding methyltransferase superfamily. C5-methyltransferase family.

It carries out the reaction a 2'-deoxycytidine in DNA + S-adenosyl-L-methionine = a 5-methyl-2'-deoxycytidine in DNA + S-adenosyl-L-homocysteine + H(+). Its function is as follows. A methylase, recognizes the double-stranded sequence 5'-GGCC-3', methylates C-? on both strands, and protects the DNA from cleavage by the FnuDI endonuclease. This Fusobacterium nucleatum protein is Type II methyltransferase M.FnuDI (fnuDIM).